A 121-amino-acid chain; its full sequence is uncharacterized protein (121 aa).

Residue 77–84 coordinates ATP; that stretch reads AALSFGKT.

This is an uncharacterized protein from Saccharomyces cerevisiae (strain ATCC 204508 / S288c) (Baker's yeast).